Here is a 540-residue protein sequence, read N- to C-terminus: Lysosomal cobalamin transport escort protein LMBD1 (540 aa).

The Extracellular segment spans residues M1 to E10. The helical transmembrane segment at L11–I31 threads the bilayer. Residues Y32 to A50 are Cytoplasmic-facing. A helical transmembrane segment spans residues I51–V71. Residues S72–G100 are Extracellular-facing. 2 N-linked (GlcNAc...) asparagine glycosylation sites follow: N78 and N88. A helical membrane pass occupies residues Y101 to F121. The Cytoplasmic portion of the chain corresponds to Y122–T144. A helical membrane pass occupies residues L145 to V165. Topologically, residues P166 to H188 are extracellular. N170 carries N-linked (GlcNAc...) asparagine glycosylation. Residues G189–I209 traverse the membrane as a helical segment. Topologically, residues T210–K305 are cytoplasmic. A YERL motif; mediates interaction with adapter protein complex 2 and is essential for its function in clathrin-mediated endocytosis of INSR motif is present at residues Y232 to L235. Position 238 is a phosphothreonine (T238). A WTKF motif; mediates interaction with adapter protein complex 2 and is essential for its function in clathrin-mediated endocytosis of INSR motif is present at residues W294–F297. Residues I306–S326 form a helical membrane-spanning segment. Topologically, residues N327 to P364 are extracellular. N347 carries N-linked (GlcNAc...) asparagine glycosylation. The helical transmembrane segment at L365–I385 threads the bilayer. Residues R386–Q408 are Cytoplasmic-facing. The chain crosses the membrane as a helical span at residues A409–Y429. Residues S430–K486 lie on the Extracellular side of the membrane. N-linked (GlcNAc...) asparagine glycosylation is found at N448 and N457. Residues F487–I507 traverse the membrane as a helical segment. The Cytoplasmic portion of the chain corresponds to G508–A540. Residues S528 and S531 each carry the phosphoserine modification.

Belongs to the LIMR family. LMBRD1 subfamily. In terms of assembly, (Microbial infection) Interacts with hepatitis delta virus NES (HDAg-L). As to quaternary structure, interacts with ABCD4; this interaction induces the translocation of ABCD4 from the endoplasmic reticulum to the lysosome. Interacts with ABCD4 and MMACHC; this interaction ensures the transport of cobalamin from the lysosome to the cytoplasm. Interacts with INSR, adapter protein complex 2 and clathrin heavy chain. In terms of processing, N-glycosylated. As to expression, isoform 3 is expressed in liver.

It is found in the endoplasmic reticulum membrane. It localises to the lysosome membrane. The protein resides in the cell membrane. Its subcellular location is the cytoplasmic vesicle. The protein localises to the clathrin-coated vesicle. Its function is as follows. Lysosomal membrane chaperone required to export cobalamin (vitamin B12) from the lysosome to the cytosol, allowing its conversion to cofactors. Targets ABCD4 transporter from the endoplasmic reticulum to the lysosome. Then forms a complex with lysosomal ABCD4 and cytoplasmic MMACHC to transport cobalamin across the lysosomal membrane. Acts as an adapter protein which plays an important role in mediating and regulating the internalization of the insulin receptor (INSR). Involved in clathrin-mediated endocytosis of INSR via its interaction with adapter protein complex 2. Essential for the initiation of gastrulation and early formation of mesoderm structures during embryogenesis. In terms of biological role, (Microbial infection) May play a role in the assembly of hepatitis delta virus (HDV). This Homo sapiens (Human) protein is Lysosomal cobalamin transport escort protein LMBD1.